Consider the following 175-residue polypeptide: Large ribosomal subunit protein uL10 (175 aa).

The protein belongs to the universal ribosomal protein uL10 family. Part of the ribosomal stalk of the 50S ribosomal subunit. The N-terminus interacts with L11 and the large rRNA to form the base of the stalk. The C-terminus forms an elongated spine to which L12 dimers bind in a sequential fashion forming a multimeric L10(L12)X complex.

Its function is as follows. Forms part of the ribosomal stalk, playing a central role in the interaction of the ribosome with GTP-bound translation factors. This Mycobacterium sp. (strain KMS) protein is Large ribosomal subunit protein uL10.